The sequence spans 46 residues: Protein PsbN (46 aa).

Residues 10–30 (LIITILAVTIAFTAVSLYTAF) form a helical membrane-spanning segment.

It belongs to the PsbN family.

Its subcellular location is the cellular thylakoid membrane. Its function is as follows. May play a role in photosystem I and II biogenesis. The sequence is that of Protein PsbN from Acaryochloris marina (strain MBIC 11017).